The sequence spans 186 residues: Peptidyl-tRNA hydrolase (186 aa).

Tyrosine 14 provides a ligand contact to tRNA. The active-site Proton acceptor is histidine 19. TRNA is bound by residues tyrosine 64, asparagine 66, and asparagine 112.

The protein belongs to the PTH family. In terms of assembly, monomer.

It localises to the cytoplasm. It catalyses the reaction an N-acyl-L-alpha-aminoacyl-tRNA + H2O = an N-acyl-L-amino acid + a tRNA + H(+). Its function is as follows. Hydrolyzes ribosome-free peptidyl-tRNAs (with 1 or more amino acids incorporated), which drop off the ribosome during protein synthesis, or as a result of ribosome stalling. In terms of biological role, catalyzes the release of premature peptidyl moieties from peptidyl-tRNA molecules trapped in stalled 50S ribosomal subunits, and thus maintains levels of free tRNAs and 50S ribosomes. This Mesoplasma florum (strain ATCC 33453 / NBRC 100688 / NCTC 11704 / L1) (Acholeplasma florum) protein is Peptidyl-tRNA hydrolase.